The sequence spans 1539 residues: Lysine-specific demethylase 5D (1539 aa).

The region spanning Cys14–Pro55 is the JmjN domain. The 91-residue stretch at Thr79 to Ser169 folds into the ARID domain. The interval Pro192 to Glu228 is disordered. The span at Leu197–Ser210 shows a compositional bias: polar residues. Residues Lys205, Lys229, Lys244, and Lys272 each participate in a glycyl lysine isopeptide (Lys-Gly) (interchain with G-Cter in SUMO2) cross-link. Residues Ser291 and Ser307 each carry the phosphoserine modification. The segment at Ile316 to Ile362 adopts a PHD-type 1 zinc-finger fold. Tyr430 is a binding site for 2-oxoglutarate. The JmjC domain maps to Glu458–Arg624. 2 residues coordinate Fe cation: His504 and Glu506. The 2-oxoglutarate site is built by Ser512, Asn514, and Lys522. His592 contributes to the Fe cation binding site. A C5HC2 zinc finger spans residues Cys697 to Met749. Residue Ser884 is modified to Phosphoserine. A PHD-type 2 zinc finger spans residues Ile1174–Met1235. Ser1346 is modified (phosphoserine). A disordered region spans residues His1429–Ala1521. Over residues Ser1432–Gln1446 the composition is skewed to basic residues. Basic and acidic residues predominate over residues Gly1477–Asn1491. Residues Leu1494 to Ala1521 show a composition bias toward polar residues.

It belongs to the JARID1 histone demethylase family. As to quaternary structure, interacts with PCGF6, MSH5, ZMYND8, AR. It depends on L-ascorbate as a cofactor. Requires Fe(2+) as cofactor. As to expression, expression is highly down-regulated in metastatic prostate tumors.

It is found in the nucleus. It carries out the reaction N(6),N(6),N(6)-trimethyl-L-lysyl(4)-[histone H3] + 3 2-oxoglutarate + 3 O2 = L-lysyl(4)-[histone H3] + 3 formaldehyde + 3 succinate + 3 CO2. Histone demethylase that specifically demethylates 'Lys-4' of histone H3, thereby playing a central role in histone code. Does not demethylate histone H3 'Lys-9', H3 'Lys-27', H3 'Lys-36', H3 'Lys-79' or H4 'Lys-20'. Demethylates trimethylated and dimethylated but not monomethylated H3 'Lys-4'. May play a role in spermatogenesis. Involved in transcriptional repression of diverse metastasis-associated genes; in this function seems to cooperate with ZMYND8. Suppresses prostate cancer cell invasion. Regulates androgen receptor (AR) transcriptional activity by demethylating H3K4me3 active transcription marks. The sequence is that of Lysine-specific demethylase 5D (KDM5D) from Homo sapiens (Human).